Consider the following 111-residue polypeptide: Cell division protein FtsB (111 aa).

The Cytoplasmic segment spans residues 1-3 (MRL). A helical transmembrane segment spans residues 4–21 (ITLFLLLLLLAIQYPLWL). Residues 22 to 111 (GKGGWLRVWD…PAALQPNHRH (90 aa)) are Periplasmic-facing. The stretch at 28 to 64 (RVWDMQKQVASQNQRNAELKQRNLKLEGEVKDLKEGT) forms a coiled coil. The interval 90 to 111 (PAPKTSETPLPPPAALQPNHRH) is disordered.

It belongs to the FtsB family. Part of a complex composed of FtsB, FtsL and FtsQ.

Its subcellular location is the cell inner membrane. In terms of biological role, essential cell division protein. May link together the upstream cell division proteins, which are predominantly cytoplasmic, with the downstream cell division proteins, which are predominantly periplasmic. The polypeptide is Cell division protein FtsB (Ralstonia nicotianae (strain ATCC BAA-1114 / GMI1000) (Ralstonia solanacearum)).